The primary structure comprises 3912 residues: Ubiquitin carboxyl-terminal hydrolase puf (3912 aa).

Disordered stretches follow at residues 101-172 (AQQQ…HKSH), 518-590 (NVTA…ISPE), 660-688 (DVPS…ECSD), 851-878 (VVSG…VQPS), and 1491-1611 (SRRG…PALS). A compositionally biased stretch (basic and acidic residues) spans 106 to 133 (EQQRDEASAQAEAKESSAPAEEPKKEEP). Low complexity predominate over residues 134-143 (SGSAGEEAQG). A compositionally biased stretch (pro residues) spans 150-164 (KKPPVGPCTPPPPQT). The segment covering 522–532 (SSSDSGSIEGS) has biased composition (low complexity). The span at 576–585 (ICDPTTEKGK) shows a compositional bias: basic and acidic residues. Over residues 660–687 (DVPSSDEADGEADGDGEGELLADSDECS) the composition is skewed to acidic residues. Residues 862–876 (KASQGSSTSGSTPVQ) are compositionally biased toward polar residues. Over residues 1511 to 1520 (VKKSSMGRRR) the composition is skewed to basic residues. Polar residues predominate over residues 1550–1567 (TPSTGLQDVETEASSSSG). A compositionally biased stretch (basic and acidic residues) spans 1583–1594 (KGETFEQEKERP). Residues 1600–1609 (PPSPTPPPPA) show a composition bias toward pro residues. The USP domain occupies 2015-2380 (VGLTNLGATC…SAYMLFYERR (366 aa)). The active-site Nucleophile is cysteine 2024. Residues 2249 to 2263 (YKEERERRQKEKEGA) show a composition bias toward basic and acidic residues. The segment at 2249-2274 (YKEERERRQKEKEGADGSGDGNDNEK) is disordered. Histidine 2305 (proton acceptor) is an active-site residue. Disordered regions lie at residues 2391–2529 (ELLV…TSKA), 3322–3344 (QQSQ…LQQQ), 3657–3776 (SERF…EERE), and 3800–3912 (ASVP…PTQI). Composition is skewed to basic and acidic residues over residues 2402 to 2413 (VEEKSEAEEPTK) and 2433 to 2488 (EKDK…EKPT). Positions 2504-2523 (NCDNHQQNNNSNSKASNDQQ) are enriched in low complexity. Positions 3657-3703 (SERFRKESERDPFPNKKQKRDSQKIKEKEHPQPESEKETSTENDKPS) are enriched in basic and acidic residues. The segment covering 3706 to 3721 (SMESSGNAEQATDSTK) has biased composition (polar residues). Over residues 3741–3751 (SDDETELEDEL) the composition is skewed to acidic residues. Residues 3766–3776 (TAQDRVNEERE) show a composition bias toward basic and acidic residues. Over residues 3865-3877 (PKTSQTNGSQQNE) the composition is skewed to polar residues. The segment covering 3878–3912 (SPPAATSADTAPANPSPAPAAAVASTSQAASPTQI) has biased composition (low complexity).

The protein belongs to the peptidase C19 family. In terms of assembly, interacts with Myc and ago.

Its subcellular location is the nucleus. It carries out the reaction Thiol-dependent hydrolysis of ester, thioester, amide, peptide and isopeptide bonds formed by the C-terminal Gly of ubiquitin (a 76-residue protein attached to proteins as an intracellular targeting signal).. Its function is as follows. Ubiquitin hydrolase that can remove conjugated ubiquitin from target proteins and polyubiquitin chains. Essential for Myc-mediated cell growth and proliferation in developing eyes and wings. In the wing and eye, the deubiquitinating activity acts as an antagonist to the SCF E3 ubiquitin-protein ligase member archipelago (ago) to regulate Myc and CycE stability and thus control cell growth and proliferation. Also appears to regulate ago by modulating its induction by Myc. May also promote cell apoptosis in the wing imaginal disk, acting in an apoptotic pathway that appears to be largely independent of Myc. Required for preventing the activation of the immune deficiency (Imd) and Toll signaling cascades under unchallenged conditions. Also appears to be involved in modulating the differential expression of certain antimicrobial peptides (AMP) in response to infection by either Gram-positive or Gram-negative bacteria. Involved in the regulation of DNA damage repair pathways, including euchromatic site-specific double strand break (DSB) repair. This chain is Ubiquitin carboxyl-terminal hydrolase puf, found in Drosophila melanogaster (Fruit fly).